We begin with the raw amino-acid sequence, 474 residues long: tRNA (adenine(58)-N(1))-methyltransferase catalytic subunit trm61 (474 aa).

The interval 75-109 (DTGSRGRTQKMKRKADELDSSTQAEDKPSPQTPVA) is disordered. S-adenosyl-L-methionine-binding positions include 163 to 165 (SGS), glutamate 197, arginine 202, 225 to 226 (DV), and aspartate 250. 2 disordered regions span residues 356-390 (LFRATQNQSDGDSTPAPKAENEAKGGQQESEVPVY) and 423-474 (DEKR…SQKE). Residues 358-367 (RATQNQSDGD) show a composition bias toward polar residues. The span at 423–432 (DEKRCREKWP) shows a compositional bias: basic and acidic residues. A compositionally biased stretch (polar residues) spans 434–443 (NRVQEPQGPQ). Residues 450 to 474 (KRESREKRDLQRKEQSQPETESQKE) show a composition bias toward basic and acidic residues.

The protein belongs to the class I-like SAM-binding methyltransferase superfamily. TRM61 family. Heterotetramer; composed of two copies of TRM6 and two copies of TRM61.

The protein localises to the nucleus. The enzyme catalyses adenosine(58) in tRNA + S-adenosyl-L-methionine = N(1)-methyladenosine(58) in tRNA + S-adenosyl-L-homocysteine + H(+). Catalytic subunit of tRNA (adenine-N(1)-)-methyltransferase, which catalyzes the formation of N(1)-methyladenine at position 58 (m1A58) in initiator methionyl-tRNA. This chain is tRNA (adenine(58)-N(1))-methyltransferase catalytic subunit trm61 (trm61), found in Aspergillus oryzae (strain ATCC 42149 / RIB 40) (Yellow koji mold).